The following is a 337-amino-acid chain: Putative transcription activator protein HfaB (337 aa).

Positions 303-313 (AYNNLGTNNAQ) are enriched in polar residues. Residues 303–337 (AYNNLGTNNAQTRDDPSRWNARRDPDIRDAKRGRY) form a disordered region. Basic and acidic residues predominate over residues 314–337 (TRDDPSRWNARRDPDIRDAKRGRY).

Required for the attachment of the holdfast to the cell. May be involved in the positive regulation of hfaC. This is Putative transcription activator protein HfaB (hfaB) from Caulobacter vibrioides (strain ATCC 19089 / CIP 103742 / CB 15) (Caulobacter crescentus).